Reading from the N-terminus, the 412-residue chain is Transcription factor IIIA (412 aa).

A disordered region spans residues 1–20 (MSESDETKSISSLISSSSSS). Residues 9 to 20 (SISSLISSSSSS) are compositionally biased toward low complexity. 7 consecutive C2H2-type zinc fingers follow at residues 25–49 (YICT…LRTH), 55–79 (YKCT…IVSH), 85–107 (FHCS…EITH), 111–136 (FKCT…LSVH), 140–162 (LTCK…KLKH), 169–194 (YQCD…KQSH), and 197–219 (LKCP…MLSH). The C2H2-type 8; degenerate zinc finger occupies 228 to 252 (WTCDYCDVGKFAKKNELVEHYNIFH). The tract at residues 285-316 (LETEKLKVEEDEEDEEDSLDEKRSDVRSDSMS) is disordered. A compositionally biased stretch (acidic residues) spans 293–303 (EEDEEDEEDSL). The segment at 345 to 369 (INCPKNNCDRMFSREYDLRRHLKWH) adopts a C2H2-type 9 zinc-finger fold.

The protein localises to the nucleus. Transcription factor required for transcription of 5S rRNA by RNA polymerase III. This Candida albicans (strain SC5314 / ATCC MYA-2876) (Yeast) protein is Transcription factor IIIA (PZF1).